Consider the following 474-residue polypeptide: Aspartyl/glutamyl-tRNA(Asn/Gln) amidotransferase subunit B (474 aa).

This sequence belongs to the GatB/GatE family. GatB subfamily. Heterotrimer of A, B and C subunits.

It catalyses the reaction L-glutamyl-tRNA(Gln) + L-glutamine + ATP + H2O = L-glutaminyl-tRNA(Gln) + L-glutamate + ADP + phosphate + H(+). The enzyme catalyses L-aspartyl-tRNA(Asn) + L-glutamine + ATP + H2O = L-asparaginyl-tRNA(Asn) + L-glutamate + ADP + phosphate + 2 H(+). Its function is as follows. Allows the formation of correctly charged Asn-tRNA(Asn) or Gln-tRNA(Gln) through the transamidation of misacylated Asp-tRNA(Asn) or Glu-tRNA(Gln) in organisms which lack either or both of asparaginyl-tRNA or glutaminyl-tRNA synthetases. The reaction takes place in the presence of glutamine and ATP through an activated phospho-Asp-tRNA(Asn) or phospho-Glu-tRNA(Gln). This chain is Aspartyl/glutamyl-tRNA(Asn/Gln) amidotransferase subunit B, found in Helicobacter hepaticus (strain ATCC 51449 / 3B1).